Here is a 406-residue protein sequence, read N- to C-terminus: CinA-like protein (406 aa).

The protein belongs to the CinA family.

In Thermomicrobium roseum (strain ATCC 27502 / DSM 5159 / P-2), this protein is CinA-like protein.